We begin with the raw amino-acid sequence, 269 residues long: MFDFMTLEKVREKGPLVHNITNIVVANDSANGLLAIGASPIMASAKEEMDELAKMADVLVINIGTLDGELVEAMKIAGRAANVAGTPVVLDPVGVGATSYRRKVVQELLAEIQFTAIRGNAGELAAIAGEAWEAKGVDAGVGSADVLSIAEKVANEWSTVVIISGEVDVISDGTRFAKVANGSALLPRITGSGCLLSAVCGSFIAVQDDAFRASVEACASYAVASEYAELELERKLPGSFRPLFLDALASWSVEKTHAKAKIQESGEHK.

Residue methionine 42 participates in substrate binding. Residues arginine 118 and serine 164 each contribute to the ATP site. A substrate-binding site is contributed by glycine 191.

It belongs to the Thz kinase family. It depends on Mg(2+) as a cofactor.

The enzyme catalyses 5-(2-hydroxyethyl)-4-methylthiazole + ATP = 4-methyl-5-(2-phosphooxyethyl)-thiazole + ADP + H(+). It functions in the pathway cofactor biosynthesis; thiamine diphosphate biosynthesis; 4-methyl-5-(2-phosphoethyl)-thiazole from 5-(2-hydroxyethyl)-4-methylthiazole: step 1/1. Its function is as follows. Catalyzes the phosphorylation of the hydroxyl group of 4-methyl-5-beta-hydroxyethylthiazole (THZ). The sequence is that of Hydroxyethylthiazole kinase from Listeria monocytogenes serotype 4a (strain HCC23).